We begin with the raw amino-acid sequence, 1222 residues long: ATP-dependent helicase/nuclease subunit A (1222 aa).

Residues 39 to 495 (QKRTAQQIEA…ILLKENFRSQ (457 aa)) enclose the UvrD-like helicase ATP-binding domain. Position 60–67 (60–67 (ASAGSGKT)) interacts with ATP. The 287-residue stretch at 524–810 (QLIAGSHAQT…NLMTIHKSKG (287 aa)) folds into the UvrD-like helicase C-terminal domain.

This sequence belongs to the helicase family. AddA subfamily. Heterodimer of AddA and AddB/RexB. Mg(2+) serves as cofactor.

It catalyses the reaction Couples ATP hydrolysis with the unwinding of duplex DNA by translocating in the 3'-5' direction.. The catalysed reaction is ATP + H2O = ADP + phosphate + H(+). Its function is as follows. The heterodimer acts as both an ATP-dependent DNA helicase and an ATP-dependent, dual-direction single-stranded exonuclease. Recognizes the chi site generating a DNA molecule suitable for the initiation of homologous recombination. The AddA nuclease domain is required for chi fragment generation; this subunit has the helicase and 3' -&gt; 5' nuclease activities. The sequence is that of ATP-dependent helicase/nuclease subunit A from Streptococcus pyogenes serotype M4 (strain MGAS10750).